A 143-amino-acid chain; its full sequence is MATVPGQLIWEIVKNNNCFLVKQFGRGNSKVQFSKETNNLTNVHSYKHSGLANKKTVTIQAADKDQAVVLATTKTKKQNKPKLSVNKSILKKEFPRMSKAVANQVVDNYYRPDLKKAALARLSAISKGLRVAKSGAKQRNRQA.

This sequence belongs to the eukaryotic ribosomal protein eL28 family. As to quaternary structure, component of the large ribosomal subunit. In terms of tissue distribution, expressed in seedlings, roots, stems, leaves, inflorescences and siliques.

It localises to the cytoplasm. It is found in the nucleus. The protein localises to the nucleolus. The protein resides in the nucleoplasm. Component of the large ribosomal subunit. Essential in leaf polarity establishment, probably having a role for translation in leaf dorsoventral patterning to specify leaf adaxial identity. This Arabidopsis thaliana (Mouse-ear cress) protein is Large ribosomal subunit protein eL28z.